The following is a 389-amino-acid chain: Na(+)/H(+) antiporter NhaA 1 (389 aa).

Transmembrane regions (helical) follow at residues 14 to 34 (AGGI…NSPL), 47 to 67 (FGMS…FLLI), 87 to 107 (IFPA…YVAF), 117 to 137 (GWAI…ALLG), 146 to 166 (VFLL…IALF), 171 to 191 (LSTL…MLNA), 197 to 217 (LIWY…SGVH), 252 to 272 (VAFA…LEGV), 280 to 300 (MLPL…IFTF), 321 to 341 (IFAV…ISSL), and 356 to 376 (LGIL…LHVS).

Belongs to the NhaA Na(+)/H(+) (TC 2.A.33) antiporter family.

It localises to the cell inner membrane. It carries out the reaction Na(+)(in) + 2 H(+)(out) = Na(+)(out) + 2 H(+)(in). In terms of biological role, na(+)/H(+) antiporter that extrudes sodium in exchange for external protons. In Vibrio vulnificus (strain CMCP6), this protein is Na(+)/H(+) antiporter NhaA 1.